Here is a 301-residue protein sequence, read N- to C-terminus: Transcriptional activator protein NhaR (301 aa).

An HTH lysR-type domain is found at 6–63 (INYNHLYYFWHVYKEGSVVGAAEALYLTPQTITGQIRALEERLQGKLFKRKGRGLEPS). The segment at residues 23 to 42 (VVGAAEALYLTPQTITGQIR) is a DNA-binding region (H-T-H motif).

Belongs to the LysR transcriptional regulatory family.

Its subcellular location is the cytoplasm. Its function is as follows. Plays a role in the positive regulation of NhaA. This Escherichia coli (strain K12) protein is Transcriptional activator protein NhaR (nhaR).